The chain runs to 256 residues: MENSYTVDGHRLQYSVPLSSMHETSQNSETYGLSKESPLVCMPLFETNTTSFDISSLFSFNPKPEPENTHRVMDDSIAAVVGENVLFGDKNKVSDHLTKEGGVKRGRKMPQKTGGFMGVRKRPWGRWSAEIRDRIGRCRHWLGTFDTAEEAARAYDAAARRLRGTKAKTNFVIPPLFPKEIAQAQEDNRMRQKQKKKKKKKVSVRKCVKVTSVAQLFDDANFINSSSIKGNVISSIDNLEKMGLELDLSLGLLSRK.

The AP2/ERF DNA-binding region spans 115–172; that stretch reads GFMGVRKRPWGRWSAEIRDRIGRCRHWLGTFDTAEEAARAYDAAARRLRGTKAKTNFV.

This sequence belongs to the AP2/ERF transcription factor family. ERF subfamily.

It localises to the nucleus. In terms of biological role, probably acts as a transcriptional activator. Binds to the GCC-box pathogenesis-related promoter element. May be involved in the regulation of gene expression by stress factors and by components of stress signal transduction pathways. In Arabidopsis thaliana (Mouse-ear cress), this protein is Ethylene-responsive transcription factor ERF084 (ERF084).